Here is a 296-residue protein sequence, read N- to C-terminus: NAD kinase (296 aa).

Asp-74 (proton acceptor) is an active-site residue. NAD(+) is bound by residues 74–75 (DG), 148–149 (ND), Arg-176, Asp-178, and 189–194 (TAYALS).

The protein belongs to the NAD kinase family. It depends on a divalent metal cation as a cofactor.

The protein resides in the cytoplasm. It catalyses the reaction NAD(+) + ATP = ADP + NADP(+) + H(+). Involved in the regulation of the intracellular balance of NAD and NADP, and is a key enzyme in the biosynthesis of NADP. Catalyzes specifically the phosphorylation on 2'-hydroxyl of the adenosine moiety of NAD to yield NADP. This Nitrosomonas europaea (strain ATCC 19718 / CIP 103999 / KCTC 2705 / NBRC 14298) protein is NAD kinase.